Reading from the N-terminus, the 103-residue chain is Large ribosomal subunit protein uL23 (103 aa).

The protein belongs to the universal ribosomal protein uL23 family. Part of the 50S ribosomal subunit. Contacts protein L29, and trigger factor when it is bound to the ribosome.

Functionally, one of the early assembly proteins it binds 23S rRNA. One of the proteins that surrounds the polypeptide exit tunnel on the outside of the ribosome. Forms the main docking site for trigger factor binding to the ribosome. The sequence is that of Large ribosomal subunit protein uL23 from Chlorobium phaeovibrioides (strain DSM 265 / 1930) (Prosthecochloris vibrioformis (strain DSM 265)).